The sequence spans 251 residues: DNA repair protein RecO (251 aa).

The protein belongs to the RecO family.

In terms of biological role, involved in DNA repair and RecF pathway recombination. This is DNA repair protein RecO from Lactococcus lactis subsp. cremoris (strain SK11).